Reading from the N-terminus, the 151-residue chain is 16.9 kDa class I heat shock protein 1 (151 aa).

Positions 37 to 151 (ETAAFANARV…PEVKAIEISG (115 aa)) constitute a sHSP domain.

The protein belongs to the small heat shock protein (HSP20) family. As to quaternary structure, may form oligomeric structures.

Its subcellular location is the cytoplasm. The sequence is that of 16.9 kDa class I heat shock protein 1 (hsp16.9A) from Triticum aestivum (Wheat).